The primary structure comprises 358 residues: RNA demethylase ALKBH5 (358 aa).

The segment at 1–50 is disordered; it reads MSATYTDLREKLQSLYRDSPKEVRKRKQPTSDTEEEEAASEPEEEEEARK. The span at 7–22 shows a compositional bias: basic and acidic residues; it reads DLREKLQSLYRDSPKE. Residues 32–46 are compositionally biased toward acidic residues; the sequence is DTEEEEAASEPEEEE. Tyr-105 is an active-site residue. 5 residues coordinate 2-oxoglutarate: Asn-159, Tyr-161, His-170, His-232, and Arg-243. Cys-196 and Cys-233 are oxidised to a cystine. Disordered stretches follow at residues 259–312 and 334–358; these read EMKS…RRSV and DYVDTYTETGEDDGSPVRKVKMRRH. The segment covering 262-278 has biased composition (polar residues); that stretch reads SLSSSYQPERLQGSNRQ. Residues 279 to 288 show a composition bias toward basic residues; sequence HILKPKRSHR. Over residues 289–310 the composition is skewed to basic and acidic residues; the sequence is KADPDAAHRPRILEMDKEENRR.

This sequence belongs to the alkB family. Monomer. Requires Fe(2+) as cofactor.

It localises to the nucleus speckle. The catalysed reaction is an N(6)-methyladenosine in mRNA + 2-oxoglutarate + O2 = an adenosine in mRNA + formaldehyde + succinate + CO2. Dioxygenase that specifically demethylates N(6)-methyladenosine (m6A) RNA, the most prevalent internal modification of messenger RNA (mRNA) in higher eukaryotes. Demethylates RNA by oxidative demethylation, which requires molecular oxygen, alpha-ketoglutarate and iron. Demethylation of m6A mRNA affects mRNA processing, translation and export. The polypeptide is RNA demethylase ALKBH5 (alkbh5) (Xenopus tropicalis (Western clawed frog)).